A 270-amino-acid polypeptide reads, in one-letter code: Acyl-[acyl-carrier-protein]--UDP-N-acetylglucosamine O-acyltransferase (270 aa).

The protein belongs to the transferase hexapeptide repeat family. LpxA subfamily. As to quaternary structure, homotrimer.

It localises to the cytoplasm. It carries out the reaction a (3R)-hydroxyacyl-[ACP] + UDP-N-acetyl-alpha-D-glucosamine = a UDP-3-O-[(3R)-3-hydroxyacyl]-N-acetyl-alpha-D-glucosamine + holo-[ACP]. It participates in glycolipid biosynthesis; lipid IV(A) biosynthesis; lipid IV(A) from (3R)-3-hydroxytetradecanoyl-[acyl-carrier-protein] and UDP-N-acetyl-alpha-D-glucosamine: step 1/6. Functionally, involved in the biosynthesis of lipid A, a phosphorylated glycolipid that anchors the lipopolysaccharide to the outer membrane of the cell. This is Acyl-[acyl-carrier-protein]--UDP-N-acetylglucosamine O-acyltransferase from Sinorhizobium fredii (strain NBRC 101917 / NGR234).